The sequence spans 293 residues: N-acetylmannosamine kinase (293 aa).

Residues 5–12 and 133–140 each bind ATP; these read AIDIGGTK and GVGGGLVI. Zn(2+) is bound by residues H157, C167, C169, and C174.

Belongs to the ROK (NagC/XylR) family. NanK subfamily. In terms of assembly, homodimer.

It carries out the reaction an N-acyl-D-mannosamine + ATP = an N-acyl-D-mannosamine 6-phosphate + ADP + H(+). It participates in amino-sugar metabolism; N-acetylneuraminate degradation; D-fructose 6-phosphate from N-acetylneuraminate: step 2/5. In terms of biological role, catalyzes the phosphorylation of N-acetylmannosamine (ManNAc) to ManNAc-6-P. The sequence is that of N-acetylmannosamine kinase from Vibrio vulnificus (strain YJ016).